We begin with the raw amino-acid sequence, 458 residues long: Chondroitin hydrolase (458 aa).

Residues 1–22 (MVIVWYHQLLLVLLIFIGAAKG) form the signal peptide. Residues 358–401 (NLDKCRMERCEGRGECYLPRPKTNPAIYNFACRCERPYFGKSCE) form the EGF-like domain. 3 disulfide bridges follow: Cys-362–Cys-373, Cys-367–Cys-389, and Cys-391–Cys-400.

The protein belongs to the glycosyl hydrolase 56 family.

Its function is as follows. Endo-beta-galactosaminidase that specifically hydrolyzes chondroitin, releasing GlcUA-beta-(1-&gt;3)-GalNAc-beta-(1-&gt;4)-GlcUA-beta-(1-&gt;3)-GalNAc as the main product. Also hydrolyzes to a lesser extent chondroitin sulfates (CS-A, CS-C) and hyaluronic acid. May regulate the function of chondroitin in cell division. The protein is Chondroitin hydrolase of Caenorhabditis elegans.